Reading from the N-terminus, the 3027-residue chain is DmX-like protein 1 (3027 aa).

3 WD repeats span residues 108 to 145 (FLESIAHNITWDPTGSRLLTGSSYLQLWSNTNLEKPTE), 166 to 206 (KTAS…RTAV), and 229 to 277 (AHPR…NDCL). A phosphoserine mark is found at serine 324, serine 422, serine 425, and serine 436. Residues 420-433 (PSSEASVEDSNQAD) show a composition bias toward polar residues. Residues 420 to 450 (PSSEASVEDSNQADVKSDEETDDGVDDLKIN) are disordered. The stretch at 476 to 516 (DHQIEVLLSEWSKNADMLFSIHPMDGSLLVWHVDWLDEYQP) is one WD 4 repeat. The tract at residues 563-584 (KQKPSGLTRSTSMLISSGHNKS) is disordered. At serine 574 the chain carries Phosphoserine. 3 WD repeats span residues 580-621 (GHNK…ESAF), 628-665 (SHKSRYCGHRFHLNDLACHSVLPLLLTTSHHNALRTPD), and 848-895 (GKDS…IPVS). Serine 918 and serine 924 each carry phosphoserine. WD repeat units follow at residues 968 to 1010 (PSAG…GESA), 1134 to 1175 (SNTK…VQDQ), and 1211 to 1251 (GSPP…EPVI). Phosphoserine is present on residues serine 1830, serine 1896, serine 1908, and serine 1970. Disordered regions lie at residues 2367 to 2412 (PSKE…SSAP) and 2446 to 2468 (SRAEYDSEESLGSDDDDNDDDDD). Acidic residues predominate over residues 2451–2468 (DSEESLGSDDDDNDDDDD). 6 WD repeats span residues 2742–2783 (KAIN…TCFR), 2785–2824 (GGNSRVTRMRFNYQGNKFGIVDADGYLSLYQTNWKCCPVT), 2836–2878 (CHNK…ANSL), 2884–2923 (CHDSGATVLAYAPKHQLLISGGRKGFTYVFDLCQRQQRQL), 2926–2965 (SHDSPVKAVAVDPTEEYFVTGSAEGNIKIWSLSTFGLLHT), and 2978–3016 (NIGTGVMQIETGPANHIFSCGADGTMKMRILPDQFSPLN).

As to expression, expressed in bone, breast, eye, foreskin, heart, parathyroid, small intestine, testis, tonsils, placenta and uterus.

This Homo sapiens (Human) protein is DmX-like protein 1 (DMXL1).